The sequence spans 207 residues: Nuclear transcription factor Y subunit beta (207 aa).

Residues 1–52 form an a domain region; sequence MTMDGDSSTTDASQLGISADYIGGSHYVIQPHDDTEDSMNDHEDTNGSKESF. The tract at residues 27-52 is disordered; it reads YVIQPHDDTEDSMNDHEDTNGSKESF. Positions 39-52 are enriched in basic and acidic residues; the sequence is MNDHEDTNGSKESF. The segment at 53-142 is b domain; it reads REQDIYLPIA…PLKLYLQKFR (90 aa). The DNA-binding element occupies 59-65; the sequence is LPIANVA. A subunit association domain (SAD) region spans residues 86–97; the sequence is VQECVSEFISFI. Residue K140 forms a Glycyl lysine isopeptide (Lys-Gly) (interchain with G-Cter in ubiquitin) linkage. The tract at residues 143-207 is c domain; the sequence is EAMKGEKGIG…ISGVQQIQFS (65 aa).

The protein belongs to the NFYB/HAP3 subunit family. As to quaternary structure, heterotrimeric transcription factor composed of three components, NF-YA, NF-YB and NF-YC. NF-YB and NF-YC must interact and dimerize for NF-YA association and DNA binding. Interacts with C1QBP. Monoubiquitination at Lys-140 plays an important role in transcriptional activation by allowing the deposition of histone H3 methylations as well as histone H2B monoubiquitination at 'Lys-121'.

The protein resides in the nucleus. Component of the sequence-specific heterotrimeric transcription factor (NF-Y) which specifically recognizes a 5'-CCAAT-3' box motif found in the promoters of its target genes. NF-Y can function as both an activator and a repressor, depending on its interacting cofactors. In Equus caballus (Horse), this protein is Nuclear transcription factor Y subunit beta (NFYB).